A 131-amino-acid chain; its full sequence is ATP synthase epsilon chain (131 aa).

This sequence belongs to the ATPase epsilon chain family. F-type ATPases have 2 components, CF(1) - the catalytic core - and CF(0) - the membrane proton channel. CF(1) has five subunits: alpha(3), beta(3), gamma(1), delta(1), epsilon(1). CF(0) has three main subunits: a, b and c.

Its subcellular location is the cell membrane. Functionally, produces ATP from ADP in the presence of a proton gradient across the membrane. This chain is ATP synthase epsilon chain, found in Bacillus pumilus (strain SAFR-032).